The sequence spans 121 residues: Large ribosomal subunit protein bL19 (121 aa).

The protein belongs to the bacterial ribosomal protein bL19 family.

Its function is as follows. This protein is located at the 30S-50S ribosomal subunit interface and may play a role in the structure and function of the aminoacyl-tRNA binding site. This chain is Large ribosomal subunit protein bL19 (rplS), found in Borreliella burgdorferi (strain ATCC 35210 / DSM 4680 / CIP 102532 / B31) (Borrelia burgdorferi).